A 271-amino-acid polypeptide reads, in one-letter code: Phosphonoacetaldehyde hydrolase (271 aa).

Catalysis depends on Asp12, which acts as the Nucleophile. Mg(2+) is bound by residues Asp12 and Ala14. Lys54 acts as the Schiff-base intermediate with substrate in catalysis. Position 188 (Asp188) interacts with Mg(2+).

The protein belongs to the HAD-like hydrolase superfamily. PhnX family. In terms of assembly, homodimer. The cofactor is Mg(2+).

The catalysed reaction is phosphonoacetaldehyde + H2O = acetaldehyde + phosphate + H(+). Its function is as follows. Involved in phosphonate degradation. The polypeptide is Phosphonoacetaldehyde hydrolase (Vibrio parahaemolyticus serotype O3:K6 (strain RIMD 2210633)).